A 319-amino-acid chain; its full sequence is Ribose-phosphate pyrophosphokinase (319 aa).

ATP-binding positions include Asp-40 to Glu-42 and Arg-99 to Gln-100. Mg(2+)-binding residues include His-134 and Asp-174. Residue Lys-198 is part of the active site. Residues Arg-200, Asp-224, and Asp-228–Thr-232 each bind D-ribose 5-phosphate.

It belongs to the ribose-phosphate pyrophosphokinase family. Class I subfamily. As to quaternary structure, homohexamer. It depends on Mg(2+) as a cofactor.

The protein localises to the cytoplasm. The catalysed reaction is D-ribose 5-phosphate + ATP = 5-phospho-alpha-D-ribose 1-diphosphate + AMP + H(+). It functions in the pathway metabolic intermediate biosynthesis; 5-phospho-alpha-D-ribose 1-diphosphate biosynthesis; 5-phospho-alpha-D-ribose 1-diphosphate from D-ribose 5-phosphate (route I): step 1/1. Involved in the biosynthesis of the central metabolite phospho-alpha-D-ribosyl-1-pyrophosphate (PRPP) via the transfer of pyrophosphoryl group from ATP to 1-hydroxyl of ribose-5-phosphate (Rib-5-P). The polypeptide is Ribose-phosphate pyrophosphokinase (Xanthomonas campestris pv. campestris (strain ATCC 33913 / DSM 3586 / NCPPB 528 / LMG 568 / P 25)).